The following is a 264-amino-acid chain: NAD kinase 1 (264 aa).

Asp-45 serves as the catalytic Proton acceptor. NAD(+) is bound by residues 45 to 46, 122 to 123, Arg-148, Asp-150, 161 to 166, and Ala-185; these read DG, NE, and TAYNKS.

This sequence belongs to the NAD kinase family. It depends on a divalent metal cation as a cofactor.

The protein resides in the cytoplasm. The enzyme catalyses NAD(+) + ATP = ADP + NADP(+) + H(+). Involved in the regulation of the intracellular balance of NAD and NADP, and is a key enzyme in the biosynthesis of NADP. Catalyzes specifically the phosphorylation on 2'-hydroxyl of the adenosine moiety of NAD to yield NADP. In Listeria monocytogenes serotype 4b (strain F2365), this protein is NAD kinase 1.